The following is a 65-amino-acid chain: Large ribosomal subunit protein bL28 (65 aa).

The disordered stretch occupies residues 1-26 (MARRDALTGKSALSGQSRSHALNATK). Over residues 11-22 (SALSGQSRSHAL) the composition is skewed to polar residues.

It belongs to the bacterial ribosomal protein bL28 family.

In Mycoplasma mycoides subsp. mycoides SC (strain CCUG 32753 / NCTC 10114 / PG1), this protein is Large ribosomal subunit protein bL28.